Consider the following 244-residue polypeptide: Fumarate reductase iron-sulfur subunit (244 aa).

Tyrosine 14 is a binding site for a menaquinone. Positions proline 16–phenylalanine 97 constitute a 2Fe-2S ferredoxin-type domain. Positions 58, 63, 66, and 78 each coordinate [2Fe-2S] cluster. In terms of domain architecture, 4Fe-4S ferredoxin-type spans methionine 140 to isoleucine 169. Residues cysteine 149, cysteine 152, and cysteine 155 each coordinate [4Fe-4S] cluster. [3Fe-4S] cluster-binding residues include cysteine 159, cysteine 205, and cysteine 211. [4Fe-4S] cluster is bound at residue cysteine 215. A menaquinone is bound at residue glutamine 226–lysine 229.

Belongs to the succinate dehydrogenase/fumarate reductase iron-sulfur protein family. In terms of assembly, fumarate dehydrogenase forms part of an enzyme complex containing four subunits: a flavoprotein, an iron-sulfur, and two hydrophobic anchor proteins. [2Fe-2S] cluster serves as cofactor. [3Fe-4S] cluster is required as a cofactor. It depends on [4Fe-4S] cluster as a cofactor.

It localises to the cell inner membrane. The catalysed reaction is a quinone + succinate = fumarate + a quinol. The enzyme catalyses a menaquinone + succinate = a menaquinol + fumarate. Functionally, two distinct, membrane-bound, FAD-containing enzymes are responsible for the catalysis of fumarate and succinate interconversion; the fumarate reductase is used in anaerobic growth, and the succinate dehydrogenase is used in aerobic growth. This chain is Fumarate reductase iron-sulfur subunit (frdB), found in Escherichia coli O157:H7.